Here is a 496-residue protein sequence, read N- to C-terminus: Cytosol aminopeptidase (496 aa).

Lysine 258 and aspartate 263 together coordinate Mn(2+). Lysine 270 is an active-site residue. Mn(2+)-binding residues include aspartate 281, aspartate 340, and glutamate 342. The active site involves arginine 344.

It belongs to the peptidase M17 family. The cofactor is Mn(2+).

The protein resides in the cytoplasm. The enzyme catalyses Release of an N-terminal amino acid, Xaa-|-Yaa-, in which Xaa is preferably Leu, but may be other amino acids including Pro although not Arg or Lys, and Yaa may be Pro. Amino acid amides and methyl esters are also readily hydrolyzed, but rates on arylamides are exceedingly low.. The catalysed reaction is Release of an N-terminal amino acid, preferentially leucine, but not glutamic or aspartic acids.. Presumably involved in the processing and regular turnover of intracellular proteins. Catalyzes the removal of unsubstituted N-terminal amino acids from various peptides. The chain is Cytosol aminopeptidase (pepA) from Helicobacter pylori (strain J99 / ATCC 700824) (Campylobacter pylori J99).